A 363-amino-acid chain; its full sequence is 3-isopropylmalate dehydrogenase (363 aa).

Position 78-91 (78-91 (GPKWENLPPESQPE)) interacts with NAD(+). Substrate contacts are provided by arginine 99, arginine 109, arginine 138, and aspartate 227. Residues aspartate 227, aspartate 251, and aspartate 255 each coordinate Mg(2+). Position 285-297 (285-297 (GSAPDIAGKNIAN)) interacts with NAD(+).

The protein belongs to the isocitrate and isopropylmalate dehydrogenases family. LeuB type 1 subfamily. Homodimer. Requires Mg(2+) as cofactor. Mn(2+) is required as a cofactor.

The protein localises to the cytoplasm. The catalysed reaction is (2R,3S)-3-isopropylmalate + NAD(+) = 4-methyl-2-oxopentanoate + CO2 + NADH. Its pathway is amino-acid biosynthesis; L-leucine biosynthesis; L-leucine from 3-methyl-2-oxobutanoate: step 3/4. Its function is as follows. Catalyzes the oxidation of 3-carboxy-2-hydroxy-4-methylpentanoate (3-isopropylmalate) to 3-carboxy-4-methyl-2-oxopentanoate. The product decarboxylates to 4-methyl-2 oxopentanoate. This is 3-isopropylmalate dehydrogenase from Salmonella paratyphi A (strain ATCC 9150 / SARB42).